Here is a 1340-residue protein sequence, read N- to C-terminus: Protein SHORT ROOT IN SALT MEDIUM 1 (1340 aa).

Disordered regions lie at residues 1-73, 161-185, 357-473, 723-750, 784-990, and 1063-1269; these read MHRD…RSHL, YGEQ…ADPS, EEER…IRRS, TVEV…KKTV, PETT…PPRA, and RNQR…KREE. Over residues 7 to 39 the composition is skewed to low complexity; that stretch reads SSRGTGYGQQQYGSQSGYSQNLGSGYPGSSVSG. Polar residues predominate over residues 46 to 60; it reads QISLSSRHPSITGAP. Composition is skewed to basic and acidic residues over residues 173–182, 357–470, and 723–735; these read LQNEPTRRYA, EEER…EASI, and TVEV…KKSP. A coiled-coil region spans residues 355 to 426; sequence LREEERRRED…RERKRALEIK (72 aa). The segment covering 810–824 has biased composition (polar residues); it reads GDTSDPSAKANEQTP. The segment covering 828 to 840 has biased composition (basic residues); sequence IVKKKIIKRVAKR. Composition is skewed to basic and acidic residues over residues 841–872, 887–988, 1069–1097, and 1105–1138; these read KVAE…KKSS, EDVK…EEPP, HQEE…DKEA, and PGKD…ETLG. Residues 1052–1086 adopt a coiled-coil conformation; that stretch reads LKKLRVKIVRQRNQRKRHQEELSVKQNEAKSQDKR. Positions 1153–1204 are enriched in acidic residues; sequence ENQDEEDDDGDDDPEEDPEEDPEEDPEEDPEEDPEECEEMDVANTEQEEPAE. Composition is skewed to basic and acidic residues over residues 1205–1214 and 1229–1257; these read EPQKKEENLE and TDNR…HGKQ. In terms of domain architecture, EF-hand spans 1270–1305; sequence TVDKELLQAFRFFDRNQAGYVRVEDMRVTIHSLGKF.

Interacts with BHLH148/RITF1. As to expression, expressed ubiquitously at high levels, including in guard cells.

It localises to the nucleus. Functionally, required for salt tolerance and sodium (Na) homeostasis after salt stress. Together with BHLH148/RITF1, regulates the transcription of several genes involved in the detoxification of reactive oxygen species (ROS) generated by salt (NaCl) stress. Binds calcium. In Arabidopsis thaliana (Mouse-ear cress), this protein is Protein SHORT ROOT IN SALT MEDIUM 1.